Consider the following 180-residue polypeptide: Crossover junction endodeoxyribonuclease RuvC (180 aa).

Residues Asp-7, Glu-66, and Asp-138 contribute to the active site. Mg(2+) contacts are provided by Asp-7, Glu-66, and Asp-138.

Belongs to the RuvC family. Homodimer which binds Holliday junction (HJ) DNA. The HJ becomes 2-fold symmetrical on binding to RuvC with unstacked arms; it has a different conformation from HJ DNA in complex with RuvA. In the full resolvosome a probable DNA-RuvA(4)-RuvB(12)-RuvC(2) complex forms which resolves the HJ. The cofactor is Mg(2+).

It is found in the cytoplasm. It catalyses the reaction Endonucleolytic cleavage at a junction such as a reciprocal single-stranded crossover between two homologous DNA duplexes (Holliday junction).. In terms of biological role, the RuvA-RuvB-RuvC complex processes Holliday junction (HJ) DNA during genetic recombination and DNA repair. Endonuclease that resolves HJ intermediates. Cleaves cruciform DNA by making single-stranded nicks across the HJ at symmetrical positions within the homologous arms, yielding a 5'-phosphate and a 3'-hydroxyl group; requires a central core of homology in the junction. The consensus cleavage sequence is 5'-(A/T)TT(C/G)-3'. Cleavage occurs on the 3'-side of the TT dinucleotide at the point of strand exchange. HJ branch migration catalyzed by RuvA-RuvB allows RuvC to scan DNA until it finds its consensus sequence, where it cleaves and resolves the cruciform DNA. This is Crossover junction endodeoxyribonuclease RuvC from Paraburkholderia phytofirmans (strain DSM 17436 / LMG 22146 / PsJN) (Burkholderia phytofirmans).